Consider the following 243-residue polypeptide: Small ribosomal subunit protein uS3 (243 aa).

The KH type-2 domain maps to 38-106; that stretch reads IRKYLNARLA…DIQINIFEVK (69 aa). Residues 214-243 are disordered; the sequence is PNFTQSKESGRGNNGGNNGGKNFKRKKNNR.

It belongs to the universal ribosomal protein uS3 family. Part of the 30S ribosomal subunit. Forms a tight complex with proteins S10 and S14.

Functionally, binds the lower part of the 30S subunit head. Binds mRNA in the 70S ribosome, positioning it for translation. The chain is Small ribosomal subunit protein uS3 from Bacteroides thetaiotaomicron (strain ATCC 29148 / DSM 2079 / JCM 5827 / CCUG 10774 / NCTC 10582 / VPI-5482 / E50).